Here is a 499-residue protein sequence, read N- to C-terminus: Cytochrome P450 11B1, mitochondrial (499 aa).

The N-terminal 24 residues, 1–24 (MALRVTADVWLARPWQCLHRTRAL), are a transit peptide targeting the mitochondrion. Heme is bound at residue C446.

This sequence belongs to the cytochrome P450 family. Heme is required as a cofactor. Adrenal zona fasciculata/reticularis.

It localises to the mitochondrion inner membrane. It carries out the reaction a steroid + 2 reduced [adrenodoxin] + O2 + 2 H(+) = an 11beta-hydroxysteroid + 2 oxidized [adrenodoxin] + H2O. The enzyme catalyses 21-hydroxyprogesterone + 2 reduced [adrenodoxin] + O2 + 2 H(+) = corticosterone + 2 oxidized [adrenodoxin] + H2O. It catalyses the reaction 21-hydroxyprogesterone + 2 reduced [adrenodoxin] + O2 + 2 H(+) = 18-hydroxy-11-deoxycorticosterone + 2 oxidized [adrenodoxin] + H2O. The catalysed reaction is 21-hydroxyprogesterone + 2 reduced [adrenodoxin] + O2 + 2 H(+) = 19-hydroxy-11-deoxycorticosterone + 2 oxidized [adrenodoxin] + H2O. It carries out the reaction 11-deoxycortisol + 2 reduced [adrenodoxin] + O2 + 2 H(+) = cortisol + 2 oxidized [adrenodoxin] + H2O. The enzyme catalyses cortisol + 2 reduced [adrenodoxin] + O2 + 2 H(+) = 18-hydroxycortisol + 2 oxidized [adrenodoxin] + H2O. It catalyses the reaction 11-deoxycortisol + 2 reduced [adrenodoxin] + O2 + 2 H(+) = 18-hydroxy-11-deoxycortisol + 2 oxidized [adrenodoxin] + H2O. Its pathway is steroid biosynthesis; glucocorticoid biosynthesis. It functions in the pathway steroid hormone biosynthesis. Its function is as follows. A cytochrome P450 monooxygenase involved in the biosynthesis of adrenal corticoids. Catalyzes a variety of reactions that are essential for many species, including detoxification, defense, and the formation of endogenous chemicals like steroid hormones. Steroid 11beta, 18- and 19-hydroxylase with preferred regioselectivity at 11beta, then 18, and lastly 19. Catalyzes the hydroxylation of 11-deoxycortisol and 11-deoxycorticosterone (21-hydroxyprogesterone) at 11beta position, yielding cortisol or corticosterone, respectively, but cannot produce aldosterone. Mechanistically, uses molecular oxygen inserting one oxygen atom into a substrate for hydroxylation and reducing the second into a water molecule. Two electrons are provided by NADPH via a two-protein mitochondrial transfer system comprising flavoprotein FDXR (adrenodoxin/ferredoxin reductase) and nonheme iron-sulfur protein FDX1 or FDX2 (adrenodoxin/ferredoxin). Due to its lack of 18-oxidation activity, it is incapable of generating aldosterone. Could also be involved in the androgen metabolic pathway. This chain is Cytochrome P450 11B1, mitochondrial (Cyp11b1), found in Rattus norvegicus (Rat).